The following is a 75-amino-acid chain: DNA-directed RNA polymerase subunit omega (75 aa).

It belongs to the RNA polymerase subunit omega family. In terms of assembly, in cyanobacteria the RNAP catalytic core is composed of 2 alpha, 1 beta, 1 beta', 1 gamma and 1 omega subunit. When a sigma factor is associated with the core the holoenzyme is formed, which can initiate transcription.

The enzyme catalyses RNA(n) + a ribonucleoside 5'-triphosphate = RNA(n+1) + diphosphate. Promotes RNA polymerase assembly. Latches the N- and C-terminal regions of the beta' subunit thereby facilitating its interaction with the beta and alpha subunits. This Prochlorococcus marinus (strain MIT 9211) protein is DNA-directed RNA polymerase subunit omega.